Here is a 1322-residue protein sequence, read N- to C-terminus: Mediator of RNA polymerase II transcription subunit 12 (1322 aa).

The segment at 1 to 21 (MSPSKYLLTPPEELHPLTDSN) is disordered.

It belongs to the Mediator complex subunit 12 family. Component of the SRB8-11 complex, which itself associates with the Mediator complex.

The protein localises to the nucleus. Component of the SRB8-11 complex. The SRB8-11 complex is a regulatory module of the Mediator complex which is itself involved in regulation of basal and activated RNA polymerase II-dependent transcription. The SRB8-11 complex may be involved in the transcriptional repression of a subset of genes regulated by Mediator. It may inhibit the association of the Mediator complex with RNA polymerase II to form the holoenzyme complex. The protein is Mediator of RNA polymerase II transcription subunit 12 (SRB8) of Kluyveromyces lactis (strain ATCC 8585 / CBS 2359 / DSM 70799 / NBRC 1267 / NRRL Y-1140 / WM37) (Yeast).